Reading from the N-terminus, the 174-residue chain is Peptide deformylase (174 aa).

Fe cation-binding residues include Cys94 and His136. Glu137 is a catalytic residue. Position 140 (His140) interacts with Fe cation.

Belongs to the polypeptide deformylase family. The cofactor is Fe(2+).

The catalysed reaction is N-terminal N-formyl-L-methionyl-[peptide] + H2O = N-terminal L-methionyl-[peptide] + formate. Its function is as follows. Removes the formyl group from the N-terminal Met of newly synthesized proteins. Requires at least a dipeptide for an efficient rate of reaction. N-terminal L-methionine is a prerequisite for activity but the enzyme has broad specificity at other positions. The sequence is that of Peptide deformylase from Rhizobium meliloti (strain 1021) (Ensifer meliloti).